A 164-amino-acid polypeptide reads, in one-letter code: Thiol peroxidase (164 aa).

The region spanning 18-163 (VSEGQHAPDF…FDAALEAYRN (146 aa)) is the Thioredoxin domain. Cys60 (cysteine sulfenic acid (-SOH) intermediate) is an active-site residue. A disulfide bridge connects residues Cys60 and Cys93.

It belongs to the peroxiredoxin family. Tpx subfamily. As to quaternary structure, homodimer.

It catalyses the reaction a hydroperoxide + [thioredoxin]-dithiol = an alcohol + [thioredoxin]-disulfide + H2O. Functionally, thiol-specific peroxidase that catalyzes the reduction of hydrogen peroxide and organic hydroperoxides to water and alcohols, respectively. Plays a role in cell protection against oxidative stress by detoxifying peroxides. This is Thiol peroxidase from Staphylococcus haemolyticus (strain JCSC1435).